The sequence spans 823 residues: Nuclear factor I family protein (823 aa).

The disordered stretch occupies residues 1-56 (MEPHLKIDVSSASGSTTTGATASTSEAPQDSQAQQTMPPPSSDWSNQFNSPEAVSP). The segment covering 10–25 (SSASGSTTTGATASTS) has biased composition (low complexity). Polar residues predominate over residues 26-52 (EAPQDSQAQQTMPPPSSDWSNQFNSPE). The CTF/NF-I DNA-binding region spans 61–253 (IKCFSPYSQE…DVDTKITLTY (193 aa)). Disordered stretches follow at residues 364–408 (PYPI…NDEV), 433–468 (SRTQQNQGAPGTSRQVRPLPDFQSQDSARSPGAFRS), and 777–823 (APPA…NEKK). Residues 386 to 396 (PSEKRSRDISS) show a composition bias toward basic and acidic residues. Polar residues predominate over residues 433–447 (SRTQQNQGAPGTSRQ). Low complexity predominate over residues 777–794 (APPACSPSSSNSSLGAAN).

It belongs to the CTF/NF-I family. Expressed in muscles, neurons and intestinal cells.

The protein localises to the nucleus. In terms of biological role, probable transcription factor which recognizes and binds the palindromic sequence 5'-TTGGCANNNTGCCAA-3' present in promoters. Plays a role in locomotion, pharyngeal pumping, egg-laying, and life span. The protein is Nuclear factor I family protein of Caenorhabditis elegans.